The primary structure comprises 349 residues: Lachesin (349 aa).

The first 18 residues, Met1–Ala18, serve as a signal peptide directing secretion. Residues Pro22 to Gln127 form the Ig-like V-type domain. Cys43 and Cys110 are oxidised to a cystine. 2 Ig-like C2-type domains span residues Pro132 to Glu218 and Pro222 to Phe315. N-linked (GlcNAc...) asparagine glycosylation is present at Asn137. Disulfide bonds link Cys154–Cys201 and Cys244–Cys299. Gly332 carries GPI-anchor amidated glycine lipidation. Positions Asp333 to Ile349 are cleaved as a propeptide — removed in mature form.

In terms of processing, the N-terminus is blocked. In terms of tissue distribution, expressed by all neurogenic cells early, but only those cells that become neuroblasts continue to express it. Expressed by neuroblasts, ganglion mother cells and neurons early in their lives, but expression becomes restricted to a subset of neurons as development progresses. Expressed by sensory neurons as they delaminate from the body wall ectoderm. It is also present on growing axons of the CNS and PNS and becomes restricted to a subset of axons later in development.

It localises to the cell membrane. In terms of biological role, may play a role in early neuronal differentiation and axon outgrowth. This is Lachesin (LAC) from Schistocerca americana (American grasshopper).